A 1008-amino-acid chain; its full sequence is G protein-regulated inducer of neurite outgrowth 1 (1008 aa).

The segment at 1-859 (MDTAEDPAWL…SPPSRRDAGL (859 aa)) is disordered. T60 carries the post-translational modification Phosphothreonine. A phosphoserine mark is found at S64 and S75. Residues 117–127 (ISGTPEATTSG) are compositionally biased toward polar residues. Composition is skewed to basic and acidic residues over residues 137–159 (TEPKSSDDRNPMFLEKMDFKSSK), 167–178 (GKEDPGSSRKAD), 230–269 (PRKEDPGSLRKVDPVSSDKVDPVFPRKEEPRYSGKEHPVS), and 279–291 (EKVDLVLSGKRDP). Phosphoserine is present on S237. Polar residues-rich tracts occupy residues 326-336 (SGKNGPVSSGT) and 391-406 (HTDTTASAKTDLTSLK). Residues S436 and S452 each carry the phosphoserine modification. Residues 454-466 (GKEDPVSSRREDP) show a composition bias toward basic and acidic residues. A compositionally biased stretch (polar residues) spans 481–491 (PESSGKTNPVS). The segment covering 549-559 (GKEDPVSKGKA) has biased composition (basic and acidic residues). The residue at position 615 (S615) is a Phosphoserine. The span at 643 to 656 (PGQEGAAAPGEAGA) shows a compositional bias: low complexity. Residues 659–679 (LKKETPQASEKVDPGSCRKAE) are compositionally biased toward basic and acidic residues. Residue S737 is modified to Phosphoserine. Residues 742-752 (RGSEGRVEPKA) are compositionally biased toward basic and acidic residues. Over residues 755-764 (VSSTEASSLG) the composition is skewed to polar residues. S799 carries the phosphoserine modification. A compositionally biased stretch (low complexity) spans 838–847 (SAFSFQAAPR). T877 bears the Phosphothreonine mark. Residues S895 and S914 each carry the phosphoserine modification. Positions 899 to 1008 (AAVAPPEPAE…CCSRAGPTAE (110 aa)) are interaction with GNAO1. The tract at residues 943-986 (ERQIEEHGRQGAPAPPPAARAGPGRSGSVRTAPPDGAAKRPPGL) is disordered. Phosphoserine is present on S993. 2 S-palmitoyl cysteine lipidation sites follow: C999 and C1000.

Interacts with activated forms of GNAI1, GNAO1 and GNAZ. In terms of processing, palmitoylation on Cys-999 and/or Cys-1000 is required for membrane targeting. As to expression, widely expressed in the central nervous system, with highest levels in spinal cord.

The protein resides in the cell membrane. It localises to the cell projection. Its subcellular location is the growth cone. May be involved in neurite outgrowth. The polypeptide is G protein-regulated inducer of neurite outgrowth 1 (GPRIN1) (Homo sapiens (Human)).